A 765-amino-acid polypeptide reads, in one-letter code: 5-methyltetrahydropteroyltriglutamate--homocysteine methyltransferase (765 aa).

Residues 18–21 and K114 each bind 5-methyltetrahydropteroyltri-L-glutamate; that span reads REWK. Residues 437-439 and E490 contribute to the L-homocysteine site; that span reads IGS. L-methionine is bound by residues 437–439 and E490; that span reads IGS. W567 lines the 5-methyltetrahydropteroyltri-L-glutamate pocket. Residue D605 participates in L-homocysteine binding. D605 serves as a coordination point for L-methionine. E611 provides a ligand contact to 5-methyltetrahydropteroyltri-L-glutamate. Zn(2+) contacts are provided by H647, C649, and E671. The active-site Proton donor is the H700. C732 lines the Zn(2+) pocket.

Belongs to the vitamin-B12 independent methionine synthase family. Zn(2+) serves as cofactor.

The catalysed reaction is 5-methyltetrahydropteroyltri-L-glutamate + L-homocysteine = tetrahydropteroyltri-L-glutamate + L-methionine. It participates in amino-acid biosynthesis; L-methionine biosynthesis via de novo pathway; L-methionine from L-homocysteine (MetE route): step 1/1. Catalyzes the transfer of a methyl group from 5-methyltetrahydrofolate to homocysteine resulting in methionine formation. The chain is 5-methyltetrahydropteroyltriglutamate--homocysteine methyltransferase from Listeria innocua serovar 6a (strain ATCC BAA-680 / CLIP 11262).